The sequence spans 443 residues: 5-methylthioadenosine/S-adenosylhomocysteine deaminase 1 (443 aa).

Zn(2+) contacts are provided by His69 and His71. Substrate contacts are provided by Glu98 and His191. His218 contacts Zn(2+). Residues Glu221 and Asp306 each coordinate substrate. Residue Asp306 coordinates Zn(2+).

Belongs to the metallo-dependent hydrolases superfamily. MTA/SAH deaminase family. Zn(2+) is required as a cofactor.

The catalysed reaction is S-adenosyl-L-homocysteine + H2O + H(+) = S-inosyl-L-homocysteine + NH4(+). It carries out the reaction S-methyl-5'-thioadenosine + H2O + H(+) = S-methyl-5'-thioinosine + NH4(+). Its function is as follows. Catalyzes the deamination of 5-methylthioadenosine and S-adenosyl-L-homocysteine into 5-methylthioinosine and S-inosyl-L-homocysteine, respectively. Is also able to deaminate adenosine. In Syntrophus aciditrophicus (strain SB), this protein is 5-methylthioadenosine/S-adenosylhomocysteine deaminase 1.